Here is a 223-residue protein sequence, read N- to C-terminus: Deoxyribose-phosphate aldolase (223 aa).

Residue D92 is the Proton donor/acceptor of the active site. K154 functions as the Schiff-base intermediate with acetaldehyde in the catalytic mechanism. The Proton donor/acceptor role is filled by K182.

Belongs to the DeoC/FbaB aldolase family. DeoC type 1 subfamily.

The protein resides in the cytoplasm. It catalyses the reaction 2-deoxy-D-ribose 5-phosphate = D-glyceraldehyde 3-phosphate + acetaldehyde. It functions in the pathway carbohydrate degradation; 2-deoxy-D-ribose 1-phosphate degradation; D-glyceraldehyde 3-phosphate and acetaldehyde from 2-deoxy-alpha-D-ribose 1-phosphate: step 2/2. Catalyzes a reversible aldol reaction between acetaldehyde and D-glyceraldehyde 3-phosphate to generate 2-deoxy-D-ribose 5-phosphate. This Haemophilus influenzae (strain 86-028NP) protein is Deoxyribose-phosphate aldolase.